The following is a 189-amino-acid chain: Crossover junction endodeoxyribonuclease RuvC (189 aa).

Active-site residues include aspartate 7, glutamate 68, and aspartate 141. Residues aspartate 7, glutamate 68, and aspartate 141 each coordinate Mg(2+).

The protein belongs to the RuvC family. In terms of assembly, homodimer which binds Holliday junction (HJ) DNA. The HJ becomes 2-fold symmetrical on binding to RuvC with unstacked arms; it has a different conformation from HJ DNA in complex with RuvA. In the full resolvosome a probable DNA-RuvA(4)-RuvB(12)-RuvC(2) complex forms which resolves the HJ. The cofactor is Mg(2+).

It localises to the cytoplasm. It carries out the reaction Endonucleolytic cleavage at a junction such as a reciprocal single-stranded crossover between two homologous DNA duplexes (Holliday junction).. In terms of biological role, the RuvA-RuvB-RuvC complex processes Holliday junction (HJ) DNA during genetic recombination and DNA repair. Endonuclease that resolves HJ intermediates. Cleaves cruciform DNA by making single-stranded nicks across the HJ at symmetrical positions within the homologous arms, yielding a 5'-phosphate and a 3'-hydroxyl group; requires a central core of homology in the junction. The consensus cleavage sequence is 5'-(A/T)TT(C/G)-3'. Cleavage occurs on the 3'-side of the TT dinucleotide at the point of strand exchange. HJ branch migration catalyzed by RuvA-RuvB allows RuvC to scan DNA until it finds its consensus sequence, where it cleaves and resolves the cruciform DNA. In Rhodococcus opacus (strain B4), this protein is Crossover junction endodeoxyribonuclease RuvC.